Reading from the N-terminus, the 53-residue chain is Lantibiotic mutacin-2 (53 aa).

The propeptide occupies 1–26 (MNKLNSNAVVSLNEVSDSELDTILGG). A cross-link (beta-methyllanthionine (Thr-Cys)) is located at residues 36–41 (TVSYEC). 2 consecutive cross-links (lanthionine (Ser-Cys)) follow at residues 38–52 (SYEC…VFTC) and 45–53 (SWQHVFTCC). Thr51 bears the 2,3-didehydrobutyrine mark.

In terms of processing, maturation of lantibiotics involves the enzymatic conversion of Thr, and Ser into dehydrated AA and the formation of thioether bonds with cysteine. This is followed by membrane translocation and cleavage of the modified precursor. Post-translationally, it is not established whether the 2,3-didehydrobutyrine is the E- or Z-isomer.

In terms of biological role, lanthionine-containing peptide antibiotic (lantibiotic) active on Gram-positive bacteria including M.luteus, S.aureus, Streptococcus, P.micros, P.acidilactici, C.sporogenes, C.diphtheriae, A.viscosus, G.vaginalis, P.acnes, L.monocytogenes and M.smegmatis, and Gram-negative bacteria including C.jejuni, H.pylori and N.gonorrhoeae. Transiently and partially depolarizes the transmembrane electrical potential and pH gradient of susceptible cells, inhibits the uptake of amino acids and depletes the intracellular ATP pool. This is Lantibiotic mutacin-2 from Streptococcus mutans.